The primary structure comprises 112 residues: Tyrosine-protein phosphatase 7 (112 aa).

A Tyrosine-protein phosphatase domain is found at 1–112 (NNVTIIVMIT…SSPESGPIVV (112 aa)). Residue Asp82 participates in substrate binding.

This sequence belongs to the protein-tyrosine phosphatase family.

The enzyme catalyses O-phospho-L-tyrosyl-[protein] + H2O = L-tyrosyl-[protein] + phosphate. The sequence is that of Tyrosine-protein phosphatase 7 (STY-7) from Styela plicata (Wrinkled sea squirt).